A 150-amino-acid polypeptide reads, in one-letter code: Globin-2 (150 aa).

In terms of domain architecture, Globin spans proline 11–tyrosine 150. The heme b site is built by histidine 74 and histidine 106.

It belongs to the globin family. Monomer.

The sequence is that of Globin-2 from Mordacia mordax (Southern hemisphere lamprey).